A 543-amino-acid chain; its full sequence is CTP synthase (543 aa).

The segment at 1 to 265 is amidoligase domain; the sequence is MTRYIFVTGG…DDFVVERFGL (265 aa). A CTP-binding site is contributed by Ser-13. Ser-13 contributes to the UTP binding site. Residues 14-19 and Asp-71 each bind ATP; that span reads SLGKGI. Positions 71 and 139 each coordinate Mg(2+). CTP-binding positions include 146–148, 186–191, and Lys-222; these read DIE and KTKPTQ. UTP is bound by residues 186–191 and Lys-222; that span reads KTKPTQ. In terms of domain architecture, Glutamine amidotransferase type-1 spans 290 to 541; it reads TIAMVGKYME…VNAALAQKAK (252 aa). Residue Gly-351 coordinates L-glutamine. Cys-378 acts as the Nucleophile; for glutamine hydrolysis in catalysis. L-glutamine is bound by residues 379–382, Glu-402, and Arg-469; that span reads LGMQ. Residues His-514 and Glu-516 contribute to the active site.

It belongs to the CTP synthase family. In terms of assembly, homotetramer.

The enzyme catalyses UTP + L-glutamine + ATP + H2O = CTP + L-glutamate + ADP + phosphate + 2 H(+). The catalysed reaction is L-glutamine + H2O = L-glutamate + NH4(+). It carries out the reaction UTP + NH4(+) + ATP = CTP + ADP + phosphate + 2 H(+). It functions in the pathway pyrimidine metabolism; CTP biosynthesis via de novo pathway; CTP from UDP: step 2/2. With respect to regulation, allosterically activated by GTP, when glutamine is the substrate; GTP has no effect on the reaction when ammonia is the substrate. The allosteric effector GTP functions by stabilizing the protein conformation that binds the tetrahedral intermediate(s) formed during glutamine hydrolysis. Inhibited by the product CTP, via allosteric rather than competitive inhibition. Catalyzes the ATP-dependent amination of UTP to CTP with either L-glutamine or ammonia as the source of nitrogen. Regulates intracellular CTP levels through interactions with the four ribonucleotide triphosphates. This is CTP synthase from Ectopseudomonas mendocina (strain ymp) (Pseudomonas mendocina).